The following is a 525-amino-acid chain: COP9 signalosome complex subunit 1b (525 aa).

The PCI domain occupies 298–460; sequence HFLNANFDHC…KILFAKEADQ (163 aa).

Belongs to the CSN1 family. As to quaternary structure, component of the CSN complex, probably composed of CSN1b, alien/CSN2, CSN3, CSN4, CSN5, CSN6, CSN7 and CSN8.

The protein resides in the cytoplasm. Its subcellular location is the nucleus. Functionally, essential component of the COP9 signalosome complex (CSN), a complex involved in various cellular and developmental processes. The CSN complex is an essential regulator of the ubiquitin (Ubl) conjugation pathway by mediating the deneddylation of the cullin subunits of the SCF-type E3 ligase complexes, leading to decrease the Ubl ligase activity of SCF. The CSN complex plays an essential role in oogenesis and embryogenesis and is required for proper photoreceptor R cell differentiation and promote lamina glial cell migration or axon targeting. It also promotes Ubl-dependent degradation of cyclin E (CycE) during early oogenesis. The protein is COP9 signalosome complex subunit 1b (CSN1b) of Drosophila melanogaster (Fruit fly).